The following is a 106-amino-acid chain: Protein Rev (106 aa).

The interval 8–16 is homomultimerization; it reads VIKFLYQSN. A disordered region spans residues 13-36; sequence YQSNPPPRPEGTRQARRNRRRRWR. Residues 24–40 carry the Nuclear localization signal and RNA-binding (RRE) motif; it reads TRQARRNRRRRWRARQR. Residues 26–36 show a composition bias toward basic residues; it reads QARRNRRRRWR. The Nuclear export signal and binding to XPO1 signature appears at 63-74; that stretch reads LQLPPLERLTLD. Phosphoserine; by host is present on residues Ser-82 and Ser-89.

It belongs to the HIV-1 REV protein family. As to quaternary structure, homomultimer; when bound to the RRE. Multimeric assembly is essential for activity and may involve XPO1. Binds to human KPNB1, XPO1, TNPO1, RANBP5 and IPO7. Interacts with the viral Integrase. Interacts with human KHDRBS1. Interacts with human NAP1; this interaction decreases Rev multimerization and stimulates its activity. Interacts with human DEAD-box helicases DDX3 and DDX24; these interactions may serve for viral RNA export to the cytoplasm and packaging, respectively. Interacts with human PSIP1; this interaction may inhibit HIV-1 DNA integration by promoting dissociation of the Integrase-LEDGF/p75 complex. Asymmetrically arginine dimethylated at one site by host PRMT6. Methylation impairs the RNA-binding activity and export of viral RNA from the nucleus to the cytoplasm. In terms of processing, phosphorylated by protein kinase CK2. Presence of, and maybe binding to the N-terminus of the regulatory beta subunit of CK2 is necessary for CK2-mediated Rev's phosphorylation.

The protein resides in the host nucleus. It localises to the host nucleolus. The protein localises to the host cytoplasm. Escorts unspliced or incompletely spliced viral pre-mRNAs (late transcripts) out of the nucleus of infected cells. These pre-mRNAs carry a recognition sequence called Rev responsive element (RRE) located in the env gene, that is not present in fully spliced viral mRNAs (early transcripts). This function is essential since most viral proteins are translated from unspliced or partially spliced pre-mRNAs which cannot exit the nucleus by the pathway used by fully processed cellular mRNAs. Rev itself is translated from a fully spliced mRNA that readily exits the nucleus. Rev's nuclear localization signal (NLS) binds directly to KPNB1/Importin beta-1 without previous binding to KPNA1/Importin alpha-1. KPNB1 binds to the GDP bound form of RAN (Ran-GDP) and targets Rev to the nucleus. In the nucleus, the conversion from Ran-GDP to Ran-GTP dissociates Rev from KPNB1 and allows Rev's binding to the RRE in viral pre-mRNAs. Rev multimerization on the RRE via cooperative assembly exposes its nuclear export signal (NES) to the surface. Rev can then form a complex with XPO1/CRM1 and Ran-GTP, leading to nuclear export of the complex. Conversion from Ran-GTP to Ran-GDP mediates dissociation of the Rev/RRE/XPO1/RAN complex, so that Rev can return to the nucleus for a subsequent round of export. Beside KPNB1, also seems to interact with TNPO1/Transportin-1, RANBP5/IPO5 and IPO7/RANBP7 for nuclear import. The nucleoporin-like HRB/RIP is an essential cofactor that probably indirectly interacts with Rev to release HIV RNAs from the perinuclear region to the cytoplasm. The polypeptide is Protein Rev (Homo sapiens (Human)).